The primary structure comprises 272 residues: uncharacterized protein (272 aa).

It localises to the periplasm. Its function is as follows. May be involved in ulvan degradation. Ulvan is the main polysaccharide component of the Ulvales (green seaweed) cell wall. It is composed of disaccharide building blocks comprising 3-sulfated rhamnose (Rha3S) linked to D-glucuronic acid (GlcA), L-iduronic acid (IduA), or D-xylose (Xyl). This is an uncharacterized protein from Formosa agariphila (strain DSM 15362 / KCTC 12365 / LMG 23005 / KMM 3901 / M-2Alg 35-1).